The sequence spans 153 residues: Putative nuclear shuttle protein (153 aa).

This sequence belongs to the nanoviridae nuclear shuttle protein family.

It is found in the host nucleus. The protein localises to the host cytoplasm. Its function is as follows. Putative nuclear shuttle protein. The polypeptide is Putative nuclear shuttle protein (DNA-N) (Faba bean necrotic yellows virus (isolate Syrian SV292-88) (FBNYV)).